Consider the following 446-residue polypeptide: Protein dyf-7 (446 aa).

Positions 1–24 (MNQLWRASCLQVLITFLLIHQNKA) are cleaved as a signal peptide. The ZP domain occupies 35–295 (DCIADSFTVV…KTCYKKVSDS (261 aa)). A disulfide bridge connects residues Cys-211 and Cys-273. A helical membrane pass occupies residues 377–397 (IPLIIMGSLASLLLFSAGAAI).

As to quaternary structure, monomer under reducing conditions. Homodimer under non-reducing conditions. May also form higher order oligomers. Post-translationally, proteolytically cleaved and secreted in vitro. In the embryo, expressed in the excretory cell and, during dendrite formation, in the non-neuronal cells surrounding the sensory neurons, including hypodermal cells.

The protein resides in the cell membrane. It localises to the cell projection. Its subcellular location is the dendrite. The protein localises to the secreted. In terms of biological role, required for permeability of amphid and phasmid neurons to external dyes, chemotaxis to ammonium chloride, avoidance of high osmotic stimuli, male mating and dauer formation. Along with dex-1, enables neurite growth and maintenance by anchoring amphid dendritic tips during neuron cell body migration in embryonic and larval development. The chain is Protein dyf-7 from Caenorhabditis elegans.